The primary structure comprises 401 residues: (1R,4R,5S)-(-)-guaia-6,10(14)-diene synthase (401 aa).

Positions 134 and 139 each coordinate Mg(2+). Positions 134–138 (DDQFD) match the DDXXD motif motif. Substrate is bound at residue Arg-242. Asn-288 and Ser-292 together coordinate Mg(2+). Residue Lys-295 participates in substrate binding. Asp-296 contributes to the Mg(2+) binding site. Position 375–376 (375–376 (RY)) interacts with substrate.

The protein belongs to the terpene synthase family. The cofactor is Mg(2+).

The catalysed reaction is (2E,6E)-farnesyl diphosphate = (1R,4R,5S)-(-)-guaia-6,10(14)-diene + diphosphate. It participates in secondary metabolite biosynthesis; terpenoid biosynthesis. Functionally, catalyzes the conversion of (2E,6E)-farnesyl diphosphate (FPP) to yield the bicyclic sesquiterpene guaia-6,10(14)-diene via a 1,10-cyclization, which requires the abstraction of the pyrophosphate from FPP to yield the (E,E)-germacradienyl cation. The only accepted substrate is farnesyl diphosphate (FPP). The chain is (1R,4R,5S)-(-)-guaia-6,10(14)-diene synthase from Fusarium mangiferae (Mango malformation disease fungus).